A 95-amino-acid chain; its full sequence is CRISPR-associated endoribonuclease Cas2 (95 aa).

D9 lines the Mg(2+) pocket.

This sequence belongs to the CRISPR-associated endoribonuclease Cas2 protein family. As to quaternary structure, homodimer, forms a heterotetramer with a Cas1 homodimer. The cofactor is Mg(2+).

CRISPR (clustered regularly interspaced short palindromic repeat), is an adaptive immune system that provides protection against mobile genetic elements (viruses, transposable elements and conjugative plasmids). CRISPR clusters contain sequences complementary to antecedent mobile elements and target invading nucleic acids. CRISPR clusters are transcribed and processed into CRISPR RNA (crRNA). Functions as a ssRNA-specific endoribonuclease. Involved in the integration of spacer DNA into the CRISPR cassette. The chain is CRISPR-associated endoribonuclease Cas2 from Methylorubrum extorquens (strain CM4 / NCIMB 13688) (Methylobacterium extorquens).